The sequence spans 332 residues: MAKVYYDEDASLEVLKGKTVAIIGYGSQGHAHALNLRDSGVNVIIGLYSGSRSAEKAKAEGFEVLIPDEAAKKADIIMMLIPDTIQPEVYETAILPNLDEGNALAFAHGFNIHFNQIVPPEYVDVFLVAPKGPGHLVRWQYEEGKGVPGLVAVHQDFTGQAKDIALAYAKGVGCTRAGLIETTFKEETETDLFGEQAVLCGGATALIKAGFETLVEAGYQPEVAYFECLHELKLIVDLIYQYGISGMRYSISDTARYGDVTRGDRIYEAVKPIHKKILDEIQRGEFAKEWVLENIARRPHFDALVKRDEEHPVEKVGKELRKMMPWLEGKGL.

The KARI N-terminal Rossmann domain maps to 2–182; it reads AKVYYDEDAS…GCTRAGLIET (181 aa). Residues 25–28, S51, S53, and 83–86 contribute to the NADP(+) site; these read YGSQ and DTIQ. H108 is a catalytic residue. Residue G134 coordinates NADP(+). Residues 183-327 enclose the KARI C-terminal knotted domain; the sequence is TFKEETETDL…KELRKMMPWL (145 aa). D191, E195, E227, and E231 together coordinate Mg(2+). Position 252 (S252) interacts with substrate.

This sequence belongs to the ketol-acid reductoisomerase family. Mg(2+) is required as a cofactor.

The catalysed reaction is (2R)-2,3-dihydroxy-3-methylbutanoate + NADP(+) = (2S)-2-acetolactate + NADPH + H(+). It carries out the reaction (2R,3R)-2,3-dihydroxy-3-methylpentanoate + NADP(+) = (S)-2-ethyl-2-hydroxy-3-oxobutanoate + NADPH + H(+). It participates in amino-acid biosynthesis; L-isoleucine biosynthesis; L-isoleucine from 2-oxobutanoate: step 2/4. Its pathway is amino-acid biosynthesis; L-valine biosynthesis; L-valine from pyruvate: step 2/4. Involved in the biosynthesis of branched-chain amino acids (BCAA). Catalyzes an alkyl-migration followed by a ketol-acid reduction of (S)-2-acetolactate (S2AL) to yield (R)-2,3-dihydroxy-isovalerate. In the isomerase reaction, S2AL is rearranged via a Mg-dependent methyl migration to produce 3-hydroxy-3-methyl-2-ketobutyrate (HMKB). In the reductase reaction, this 2-ketoacid undergoes a metal-dependent reduction by NADPH to yield (R)-2,3-dihydroxy-isovalerate. In Persephonella marina (strain DSM 14350 / EX-H1), this protein is Ketol-acid reductoisomerase (NADP(+)).